A 209-amino-acid polypeptide reads, in one-letter code: Protocatechuate 3,4-dioxygenase alpha chain (209 aa).

R142 serves as a coordination point for 3,4-dihydroxybenzoate.

It belongs to the intradiol ring-cleavage dioxygenase family. As to quaternary structure, the enzyme is an oligomer of 12 copies of the alpha and beta chains. Fe(3+) serves as cofactor.

It carries out the reaction 3,4-dihydroxybenzoate + O2 = 3-carboxy-cis,cis-muconate + 2 H(+). Its pathway is aromatic compound metabolism; beta-ketoadipate pathway; 3-carboxy-cis,cis-muconate from 3,4-dihydroxybenzoate: step 1/1. Functionally, plays an essential role in the utilization of numerous aromatic and hydroaromatic compounds via the beta-ketoadipate pathway. The protein is Protocatechuate 3,4-dioxygenase alpha chain (pcaG) of Acinetobacter baylyi (strain ATCC 33305 / BD413 / ADP1).